A 545-amino-acid chain; its full sequence is E3 ubiquitin-protein ligase ipaH9.8 (545 aa).

The interaction with target proteins stretch occupies residues 1–242 (MLPINNNFSL…YHGPRIYFSM (242 aa)). 8 LRR repeats span residues 57–77 (NSDELRLDRLNLSSLPDNLPA), 78–99 (QITLLNVSYNQLTNLPELPVTL), 100–117 (KKLYSASNKLSELPVLPP), 118–139 (ALESLQVQHNELENLPALPDSL), 140–157 (LTMNISYNEIVSLPSLPQ), 158–179 (ALKNLRATRNFLTELPAFSEGN), 182–203 (VVREYFFDRNQISHIPESILNL), and 205–228 (NECSIHISDNPLSSHALQALQRLT). The segment at 243–250 (SDGQQNTL) is linker. An E3 ubiquitin-protein ligase catalytic domain region spans residues 251 to 545 (HRPLADAVTA…SENGSQLHHS (295 aa)). Residues 253–545 (PLADAVTAWF…SENGSQLHHS (293 aa)) form the NEL domain. Cys337 acts as the Glycyl thioester intermediate in catalysis.

It belongs to the LRR-containing bacterial E3 ligase family. As to quaternary structure, also interacts with human and mouse U2AF1 (U2AF35). In terms of processing, ubiquitinated in the presence of host E1 ubiquitin-activating enzyme, E2 ubiquitin-conjugating enzyme and ubiquitin.

It localises to the secreted. It is found in the host cytoplasm. The protein localises to the host nucleus. The catalysed reaction is S-ubiquitinyl-[E2 ubiquitin-conjugating enzyme]-L-cysteine + [acceptor protein]-L-lysine = [E2 ubiquitin-conjugating enzyme]-L-cysteine + N(6)-ubiquitinyl-[acceptor protein]-L-lysine.. Exists in an autoinhibited state in the absence of substrate protein, due to interactions of the leucine-rich repeats with NEL domain. Is activated upon binding to a substrate protein. Functionally, effector E3 ubiquitin ligase that interferes with host's ubiquitination pathway and modulates the acute inflammatory responses, thus facilitating bacterial colonization within the host cell. Interacts with IKBKG (NEMO) and TNIP1 (ABIN-1), a ubiquitin-binding adapter protein, which results in TNIP1-dependent 'Lys-27'-linked polyubiquitination of IKBKG. Consequently, polyubiquitinated IKBKG undergoes proteasome-dependent degradation, which perturbs NF-kappa-B activation during bacterial infection. Mediates polyubiquitination of host U2AF1, leading to its proteasomal degradation. Catalyzes 'Lys-48'-linked polyubiquitination and subsequent degradation of a subset of host guanylate-binding proteins (GBP1, GBP2, GBP4 and GBP6), thereby suppressing host cell defense. In contrast, host GBP3 and GBP7 are not ubiquitinated by IpaH9.8. Uses UBE2D2 (UBCH5B) as an E2 ubiquitin-conjugating enzyme. The sequence is that of E3 ubiquitin-protein ligase ipaH9.8 (ipaH9.8) from Shigella dysenteriae serotype 1 (strain Sd197).